The sequence spans 500 residues: NAD(P)H-quinone oxidoreductase chain 4, chloroplastic (500 aa).

A run of 14 helical transmembrane segments spans residues 4 to 24, 35 to 55, 87 to 107, 113 to 130, 134 to 154, 167 to 187, 208 to 228, 242 to 262, 272 to 292, 305 to 325, 330 to 350, 386 to 406, 416 to 436, and 462 to 482; these read FPWL…IFFL, YTIC…CYHF, IGPI…AWPV, LFHF…GLFS, LLLF…LLAM, FILY…GVAL, VLEI…SPII, HYST…YGLI, AHSI…IYAA, IAYS…SLTD, GALL…FLAG, LALP…GIIT, LLIT…SLSM, and LFLS…PDFV.

It belongs to the complex I subunit 4 family.

It is found in the plastid. The protein localises to the chloroplast thylakoid membrane. It catalyses the reaction a plastoquinone + NADH + (n+1) H(+)(in) = a plastoquinol + NAD(+) + n H(+)(out). The catalysed reaction is a plastoquinone + NADPH + (n+1) H(+)(in) = a plastoquinol + NADP(+) + n H(+)(out). In Solanum lycopersicum (Tomato), this protein is NAD(P)H-quinone oxidoreductase chain 4, chloroplastic.